The chain runs to 574 residues: Urease subunit alpha (574 aa).

Residues 131–574 enclose the Urease domain; sequence GAIDSHIHFI…LPMAQRYLLI (444 aa). His136, His138, and Lys219 together coordinate Ni(2+). Position 219 is an N6-carboxylysine (Lys219). His221 contacts substrate. Positions 248 and 274 each coordinate Ni(2+). His322 acts as the Proton donor in catalysis. Asp362 contacts Ni(2+).

Belongs to the metallo-dependent hydrolases superfamily. Urease alpha subunit family. Heterotrimer of UreA (gamma), UreB (beta) and UreC (alpha) subunits. Three heterotrimers associate to form the active enzyme. Ni cation is required as a cofactor. Post-translationally, carboxylation allows a single lysine to coordinate two nickel ions.

The protein resides in the cytoplasm. The catalysed reaction is urea + 2 H2O + H(+) = hydrogencarbonate + 2 NH4(+). The protein operates within nitrogen metabolism; urea degradation; CO(2) and NH(3) from urea (urease route): step 1/1. This Prochlorococcus marinus (strain MIT 9303) protein is Urease subunit alpha.